Here is a 562-residue protein sequence, read N- to C-terminus: Dihydroxy-acid dehydratase (562 aa).

Asp80 is a binding site for Mg(2+). Cys121 is a [2Fe-2S] cluster binding site. Residues Asp122 and Lys123 each coordinate Mg(2+). At Lys123 the chain carries N6-carboxylysine. Position 194 (Cys194) interacts with [2Fe-2S] cluster. Glu446 lines the Mg(2+) pocket. Ser472 (proton acceptor) is an active-site residue.

The protein belongs to the IlvD/Edd family. As to quaternary structure, homodimer. It depends on [2Fe-2S] cluster as a cofactor. Requires Mg(2+) as cofactor.

The catalysed reaction is (2R)-2,3-dihydroxy-3-methylbutanoate = 3-methyl-2-oxobutanoate + H2O. It carries out the reaction (2R,3R)-2,3-dihydroxy-3-methylpentanoate = (S)-3-methyl-2-oxopentanoate + H2O. It participates in amino-acid biosynthesis; L-isoleucine biosynthesis; L-isoleucine from 2-oxobutanoate: step 3/4. Its pathway is amino-acid biosynthesis; L-valine biosynthesis; L-valine from pyruvate: step 3/4. Its function is as follows. Functions in the biosynthesis of branched-chain amino acids. Catalyzes the dehydration of (2R,3R)-2,3-dihydroxy-3-methylpentanoate (2,3-dihydroxy-3-methylvalerate) into 2-oxo-3-methylpentanoate (2-oxo-3-methylvalerate) and of (2R)-2,3-dihydroxy-3-methylbutanoate (2,3-dihydroxyisovalerate) into 2-oxo-3-methylbutanoate (2-oxoisovalerate), the penultimate precursor to L-isoleucine and L-valine, respectively. This chain is Dihydroxy-acid dehydratase, found in Staphylococcus aureus (strain COL).